The following is a 486-amino-acid chain: Kynurenine 3-monooxygenase (486 aa).

2 helical membrane passes run 401 to 424 (LLFW…HMRY) and 437 to 459 (ILTR…LCYR).

Belongs to the aromatic-ring hydroxylase family. KMO subfamily. FAD serves as cofactor.

The protein resides in the mitochondrion. Its subcellular location is the membrane. It carries out the reaction L-kynurenine + NADPH + O2 + H(+) = 3-hydroxy-L-kynurenine + NADP(+) + H2O. Its pathway is cofactor biosynthesis; NAD(+) biosynthesis; quinolinate from L-kynurenine: step 1/3. Its function is as follows. Catalyzes the hydroxylation of L-kynurenine (L-Kyn) to form 3-hydroxy-L-kynurenine (L-3OHKyn). Required for synthesis of quinolinic acid. The chain is Kynurenine 3-monooxygenase (kh) from Anopheles gambiae (African malaria mosquito).